The chain runs to 931 residues: Mitochondrial cox1 translation regulator ppr4 (931 aa).

Residues 1 to 16 (MSKSFAYRHIWCFWRF) constitute a mitochondrion transit peptide. 7 PPR repeats span residues 247-277 (NEVL…MYRT), 282-316 (SFTA…RPKI), 429-461 (HLLN…KIKV), 462-496 (DERT…GIKT), 497-531 (SNQA…GITE), 598-632 (NVVH…GKAP), and 683-713 (PPSL…YLEY).

In terms of assembly, component of the MRH5C complex, composed of mrh5, ppr4, mtf2, and sls1. Proteins mtf2 and sls1 form a subcomplex that serves as a scaffold to bring mrh5 and ppr4 together. The MRH5C complex associates with the small subunit of the mitochondrial ribosome.

Its subcellular location is the mitochondrion. In terms of biological role, RNA-binding translation activation factor that as part of the MRH5C complex specifically recruits cox1 mRNA to the mitochondrial ribosome for translation initiation. This chain is Mitochondrial cox1 translation regulator ppr4, found in Schizosaccharomyces pombe (strain 972 / ATCC 24843) (Fission yeast).